The sequence spans 499 residues: RNA polymerase sigma factor SigA (499 aa).

Basic residues-rich tracts occupy residues 1 to 12 (MSSPKKNFKKPQ) and 77 to 87 (KKRRGRKPKHA). Disordered regions lie at residues 1–25 (MSSP…LNEE) and 68–89 (QENK…HAPL). The segment at 252–322 (LVTSNLRLVV…TRAIADQART (71 aa)) is sigma-70 factor domain-2. The Interaction with polymerase core subunit RpoC motif lies at 276–279 (DLIQ). The segment at 331-412 (ETINRLAKAE…DTDAQMPDEF (82 aa)) is sigma-70 factor domain-3. Positions 425-480 (LLNNCLSEQEELIVRMRIGMPPYNETKTLDEVSQKIKIPREKIRQIETKAIRKLRQ) are sigma-70 factor domain-4. Residues 453–472 (LDEVSQKIKIPREKIRQIET) constitute a DNA-binding region (H-T-H motif).

It belongs to the sigma-70 factor family. RpoD/SigA subfamily. In terms of assembly, interacts transiently with the RNA polymerase catalytic core.

It localises to the cytoplasm. In terms of biological role, sigma factors are initiation factors that promote the attachment of RNA polymerase to specific initiation sites and are then released. This sigma factor is the primary sigma factor during exponential growth. This is RNA polymerase sigma factor SigA from Mycoplasma pneumoniae (strain ATCC 29342 / M129 / Subtype 1) (Mycoplasmoides pneumoniae).